Here is a 447-residue protein sequence, read N- to C-terminus: 1-aminocyclopropane-1-carboxylate synthase 7 (447 aa).

Residues Glu-61 and Tyr-100 each coordinate substrate. Lys-285 bears the N6-(pyridoxal phosphate)lysine mark.

It belongs to the class-I pyridoxal-phosphate-dependent aminotransferase family. As to quaternary structure, homodimer and heterodimer. In vivo, the relevance of heterodimerization with other ACS enzymes is however unsure. Interacts with XBAT32. It depends on pyridoxal 5'-phosphate as a cofactor. In terms of processing, ubiquitinated by XBAT32. Ubiquitination probably leads to its subsequent degradation, thus controlling ethylene production. As to expression, expressed in roots.

It carries out the reaction S-adenosyl-L-methionine = 1-aminocyclopropane-1-carboxylate + S-methyl-5'-thioadenosine + H(+). The protein operates within alkene biosynthesis; ethylene biosynthesis via S-adenosyl-L-methionine; ethylene from S-adenosyl-L-methionine: step 1/2. Functionally, 1-aminocyclopropane-1-carboxylate synthase (ACS) enzymes catalyze the conversion of S-adenosyl-L-methionine (SAM) into 1-aminocyclopropane-1-carboxylate (ACC), a direct precursor of ethylene. This Arabidopsis thaliana (Mouse-ear cress) protein is 1-aminocyclopropane-1-carboxylate synthase 7 (ACS7).